The sequence spans 360 residues: 3-dehydroquinate synthase (360 aa).

Residues 71–76, 105–109, 129–130, Lys-142, and Lys-151 contribute to the NAD(+) site; these read DGEAHK, GVVGD, and TT. 3 residues coordinate Zn(2+): Glu-184, His-247, and His-264.

Belongs to the sugar phosphate cyclases superfamily. Dehydroquinate synthase family. It depends on Co(2+) as a cofactor. Zn(2+) is required as a cofactor. NAD(+) serves as cofactor.

The protein resides in the cytoplasm. The enzyme catalyses 7-phospho-2-dehydro-3-deoxy-D-arabino-heptonate = 3-dehydroquinate + phosphate. Its pathway is metabolic intermediate biosynthesis; chorismate biosynthesis; chorismate from D-erythrose 4-phosphate and phosphoenolpyruvate: step 2/7. Its function is as follows. Catalyzes the conversion of 3-deoxy-D-arabino-heptulosonate 7-phosphate (DAHP) to dehydroquinate (DHQ). This is 3-dehydroquinate synthase from Azoarcus sp. (strain BH72).